Here is a 469-residue protein sequence, read N- to C-terminus: Glutamate--tRNA ligase (469 aa).

The 'HIGH' region motif lies at 10–20 (PSPTGYLHVGG). Residues Cys99, Cys101, Cys126, and Asp128 each contribute to the Zn(2+) site. The 'KMSKS' region motif lies at 238–242 (RLSKR). ATP is bound at residue Lys241.

It belongs to the class-I aminoacyl-tRNA synthetase family. Glutamate--tRNA ligase type 1 subfamily. As to quaternary structure, monomer. Zn(2+) serves as cofactor.

The protein localises to the cytoplasm. The catalysed reaction is tRNA(Glu) + L-glutamate + ATP = L-glutamyl-tRNA(Glu) + AMP + diphosphate. Catalyzes the attachment of glutamate to tRNA(Glu) in a two-step reaction: glutamate is first activated by ATP to form Glu-AMP and then transferred to the acceptor end of tRNA(Glu). This chain is Glutamate--tRNA ligase, found in Pelobacter propionicus (strain DSM 2379 / NBRC 103807 / OttBd1).